A 251-amino-acid chain; its full sequence is Imidazole glycerol phosphate synthase subunit HisF (251 aa).

Active-site residues include Asp11 and Asp130.

It belongs to the HisA/HisF family. As to quaternary structure, heterodimer of HisH and HisF.

The protein localises to the cytoplasm. The catalysed reaction is 5-[(5-phospho-1-deoxy-D-ribulos-1-ylimino)methylamino]-1-(5-phospho-beta-D-ribosyl)imidazole-4-carboxamide + L-glutamine = D-erythro-1-(imidazol-4-yl)glycerol 3-phosphate + 5-amino-1-(5-phospho-beta-D-ribosyl)imidazole-4-carboxamide + L-glutamate + H(+). The protein operates within amino-acid biosynthesis; L-histidine biosynthesis; L-histidine from 5-phospho-alpha-D-ribose 1-diphosphate: step 5/9. In terms of biological role, IGPS catalyzes the conversion of PRFAR and glutamine to IGP, AICAR and glutamate. The HisF subunit catalyzes the cyclization activity that produces IGP and AICAR from PRFAR using the ammonia provided by the HisH subunit. This Chlorobium phaeobacteroides (strain BS1) protein is Imidazole glycerol phosphate synthase subunit HisF.